A 452-amino-acid polypeptide reads, in one-letter code: Cytochrome b-c1 complex subunit 2, mitochondrial (452 aa).

Residues 1 to 14 (MKLLSRAGSFSRFY) constitute a mitochondrion transit peptide. An N6-acetyllysine mark is found at Lys65, Lys198, and Lys249. Phosphoserine is present on Ser367.

It belongs to the peptidase M16 family. UQCRC2/QCR2 subfamily. In terms of assembly, component of the ubiquinol-cytochrome c oxidoreductase (cytochrome b-c1 complex, complex III, CIII), a multisubunit enzyme composed of 11 subunits. The complex is composed of 3 respiratory subunits cytochrome b, cytochrome c1 and Rieske protein UQCRFS1, 2 core protein subunits UQCRC1/QCR1 and UQCRC2/QCR2, and 6 low-molecular weight protein subunits UQCRH/QCR6, UQCRB/QCR7, UQCRQ/QCR8, UQCR10/QCR9, UQCR11/QCR10 and subunit 9, the cleavage product of Rieske protein UQCRFS1. The complex exists as an obligatory dimer and forms supercomplexes (SCs) in the inner mitochondrial membrane with NADH-ubiquinone oxidoreductase (complex I, CI) and cytochrome c oxidase (complex IV, CIV), resulting in different assemblies (supercomplex SCI(1)III(2)IV(1) and megacomplex MCI(2)III(2)IV(2)). Interacts with RAB5IF. Interacts with STMP1. As to expression, expressed in the head region and flagellum of epididymal sperm.

The protein resides in the mitochondrion inner membrane. Functionally, component of the ubiquinol-cytochrome c oxidoreductase, a multisubunit transmembrane complex that is part of the mitochondrial electron transport chain which drives oxidative phosphorylation. The respiratory chain contains 3 multisubunit complexes succinate dehydrogenase (complex II, CII), ubiquinol-cytochrome c oxidoreductase (cytochrome b-c1 complex, complex III, CIII) and cytochrome c oxidase (complex IV, CIV), that cooperate to transfer electrons derived from NADH and succinate to molecular oxygen, creating an electrochemical gradient over the inner membrane that drives transmembrane transport and the ATP synthase. The cytochrome b-c1 complex catalyzes electron transfer from ubiquinol to cytochrome c, linking this redox reaction to translocation of protons across the mitochondrial inner membrane, with protons being carried across the membrane as hydrogens on the quinol. In the process called Q cycle, 2 protons are consumed from the matrix, 4 protons are released into the intermembrane space and 2 electrons are passed to cytochrome c. The 2 core subunits UQCRC1/QCR1 and UQCRC2/QCR2 are homologous to the 2 mitochondrial-processing peptidase (MPP) subunits beta-MPP and alpha-MPP respectively, and they seem to have preserved their MPP processing properties. May be involved in the in situ processing of UQCRFS1 into the mature Rieske protein and its mitochondrial targeting sequence (MTS)/subunit 9 when incorporated into complex III. This is Cytochrome b-c1 complex subunit 2, mitochondrial (Uqcrc2) from Rattus norvegicus (Rat).